The primary structure comprises 514 residues: Maturase K (514 aa).

Belongs to the intron maturase 2 family. MatK subfamily.

Its subcellular location is the plastid. It is found in the chloroplast. Usually encoded in the trnK tRNA gene intron. Probably assists in splicing its own and other chloroplast group II introns. In Dioon spinulosum (Gum palm), this protein is Maturase K.